The chain runs to 693 residues: CREB-regulated transcription coactivator 2 (693 aa).

Polar residues predominate over residues 1–20 (MATSGANGPGSATASASNPR). A disordered region spans residues 1-30 (MATSGANGPGSATASASNPRKFSEKIALQK). A2 is modified (N-acetylalanine). An Asymmetric dimethylarginine; by PRMT6 modification is found at R51. Residues S70, S86, and S90 each carry the phosphoserine modification. Residues R99, R120, and R123 each carry the asymmetric dimethylarginine; by PRMT6 modification. S136 is modified (phosphoserine). Asymmetric dimethylarginine; by PRMT6 occurs at positions 161 and 168. T169 carries the phosphothreonine modification. S171 is modified (phosphoserine; by AMPK, MARK2, SIK1 and SIK2). T192 is subject to Phosphothreonine. A Glycyl lysine isopeptide (Lys-Gly) (interchain with G-Cter in SUMO2) cross-link involves residue K234. Residues 271 to 287 (TGGSLPDLTNLHFPPPL) carry the Nuclear export signal motif. A Phosphoserine; by MARK2 modification is found at S274. Disordered regions lie at residues 282–306 (HFPP…GGNS) and 328–554 (GYDA…MSDF). Phosphoserine is present on residues S306, S368, S393, S433, and S456. 2 stretches are compositionally biased toward low complexity: residues 331–378 (APGL…SSLA) and 386–415 (SLGH…GAPS). The segment covering 447 to 468 (SQQQLPKQFSPTMSPTLSSITQ) has biased composition (polar residues). A Phosphotyrosine modification is found at Y488. S489, S490, and S492 each carry phosphoserine. Residues 498 to 507 (QPHTPKSLQQ) show a composition bias toward polar residues. Position 501 is a phosphothreonine (T501). Over residues 509 to 529 (GLPSQSCSVQSSGGQPPGRQS) the composition is skewed to low complexity. Phosphoserine is present on residues S613, S623, and S624.

This sequence belongs to the TORC family. In terms of assembly, binds, as a tetramer, through its N-terminal region, with the bZIP domain of CREB1. 'Arg-314' in the bZIP domain of CREB1 is essential for this interaction. Interaction, via its C-terminal, with TAF4, enhances recruitment of TAF4 to CREB1. Interacts with SIK2. Interacts with 14-3-3 proteins, YWHAB and YWHAG. Interacts (probably when phosphorylated at Ser-171) with YWHAE. Interacts with calmodulin-dependent catalytic subunit PPP3CA/calcineurin A. Interaction with COP1 mediates nuclear export and degradation of CRTC2. (Microbial infection) Interaction with the human T-cell leukemia virus type 1 (HTLV-1) Tax protein is essential for optimal transcription activation by Tax. In terms of processing, phosphorylation/dephosphorylation states of Ser-171 are required for regulating transduction of CREB activity. CRTCs/TORCs are inactive when phosphorylated, and active when dephosphorylated at this site. This primary site of phosphorylation, is regulated by cAMP and calcium levels and is dependent on the phosphorylation of SIKs (SIK1 and SIK2) by LKB1. Following adenylyl cyclase activation, dephosphorylated at Ser-171 by PPP3CA/calcineurin A resulting in CRTC2 dissociation from 14-3-3 proteins and PPP3CA. Both insulin and AMPK increase this phosphorylation of CRTC2 while glucagon suppresses it. Phosphorylation at Ser-274 by MARK2 is induced under low glucose conditions and dephosphorylated in response to glucose influx. Phosphorylation at Ser-274 promotes interaction with 14-3-3 proteins and translocation to the cytoplasm. Post-translationally, asymmetric dimethylation of arginine resisues by PRMT6 enhances the association of CRTC2 with CREB on the promoters of gluconeogenic genes. Most abundantly expressed in the thymus. Present in both B and T-lymphocytes. Highly expressed in HEK293T cells and in insulinomas. High levels also in spleen, ovary, muscle and lung, with highest levels in muscle. Lower levels found in brain, colon, heart, kidney, prostate, small intestine and stomach. Weak expression in liver and pancreas.

The protein localises to the cytoplasm. Its subcellular location is the nucleus. Functionally, transcriptional coactivator for CREB1 which activates transcription through both consensus and variant cAMP response element (CRE) sites. Acts as a coactivator, in the SIK/TORC signaling pathway, being active when dephosphorylated and acts independently of CREB1 'Ser-133' phosphorylation. Enhances the interaction of CREB1 with TAF4. Regulates gluconeogenesis as a component of the LKB1/AMPK/TORC2 signaling pathway. Regulates the expression of specific genes such as the steroidogenic gene, StAR. Potent coactivator of PPARGC1A and inducer of mitochondrial biogenesis in muscle cells. Also coactivator for TAX activation of the human T-cell leukemia virus type 1 (HTLV-1) long terminal repeats (LTR). This chain is CREB-regulated transcription coactivator 2 (CRTC2), found in Homo sapiens (Human).